A 79-amino-acid polypeptide reads, in one-letter code: Small ribosomal subunit protein uS17 (79 aa).

It belongs to the universal ribosomal protein uS17 family. In terms of assembly, part of the 30S ribosomal subunit.

Functionally, one of the primary rRNA binding proteins, it binds specifically to the 5'-end of 16S ribosomal RNA. This is Small ribosomal subunit protein uS17 from Rhizobium leguminosarum bv. trifolii (strain WSM2304).